The following is a 357-amino-acid chain: Glutamine synthetase cytosolic isozyme (357 aa).

The GS beta-grasp domain maps to 20–100 (VIAEYIWIGG…VICDAYSPNG (81 aa)). In terms of domain architecture, GS catalytic spans 107 to 357 (KRAAAAKIFN…IAETTILWKP (251 aa)).

It belongs to the glutamine synthetase family. In terms of assembly, homooctamer.

It localises to the cytoplasm. It carries out the reaction L-glutamate + NH4(+) + ATP = L-glutamine + ADP + phosphate + H(+). The protein is Glutamine synthetase cytosolic isozyme of Pinus sylvestris (Scotch pine).